We begin with the raw amino-acid sequence, 230 residues long: Somatolactin (230 aa).

A signal peptide spans 1–23 (MKKTTVLQVCMVFVVCSLQAVIG). Disulfide bonds link cysteine 28–cysteine 38, cysteine 87–cysteine 202, and cysteine 219–cysteine 227. Residue asparagine 226 is glycosylated (N-linked (GlcNAc...) asparagine).

The protein belongs to the somatotropin/prolactin family.

Its subcellular location is the secreted. The polypeptide is Somatolactin (Carassius auratus (Goldfish)).